The chain runs to 173 residues: CKLF-like MARVEL transmembrane domain-containing protein 8 (173 aa).

An MARVEL domain is found at 36-168; it reads FLRTLPGLLI…NTYFSFIAWR (133 aa). Transmembrane regions (helical) follow at residues 40–60, 70–90, 105–125, and 147–167; these read LPGL…TLIA, FGWV…FLII, TTVG…AAIV, and FFAF…FIAW.

This sequence belongs to the chemokine-like factor family.

Its subcellular location is the membrane. In Bos taurus (Bovine), this protein is CKLF-like MARVEL transmembrane domain-containing protein 8 (CMTM8).